Consider the following 305-residue polypeptide: tRNA uridine(34) hydroxylase (305 aa).

The region spanning 125-219 is the Rhodanese domain; it reads ADENTVVVDT…YLEEVPREQS (95 aa). Catalysis depends on C179, which acts as the Cysteine persulfide intermediate.

It belongs to the TrhO family.

It carries out the reaction uridine(34) in tRNA + AH2 + O2 = 5-hydroxyuridine(34) in tRNA + A + H2O. Functionally, catalyzes oxygen-dependent 5-hydroxyuridine (ho5U) modification at position 34 in tRNAs. The chain is tRNA uridine(34) hydroxylase from Brucella suis (strain ATCC 23445 / NCTC 10510).